We begin with the raw amino-acid sequence, 450 residues long: Tripartite motif-containing protein 77 (450 aa).

The segment at cysteine 15–arginine 56 adopts an RING-type zinc-finger fold. A B box-type zinc finger spans residues serine 88–glutamate 131. The Zn(2+) site is built by cysteine 93, histidine 96, cysteine 115, and histidine 121. The region spanning glutamine 269 to lysine 450 is the B30.2/SPRY domain.

This sequence belongs to the TRIM/RBCC family.

This chain is Tripartite motif-containing protein 77 (TRIM77), found in Homo sapiens (Human).